Consider the following 418-residue polypeptide: Tyrosine--tRNA ligase (418 aa).

Tyr-38 lines the L-tyrosine pocket. The short motif at 43-52 is the 'HIGH' region element; it reads CTAKSLHVGS. L-tyrosine is bound by residues Tyr-175 and Gln-179. The 'KMSKS' region motif lies at 235–239; sequence KMGKT. ATP is bound at residue Lys-238. Residues 348–413 form the S4 RNA-binding domain; that stretch reads LPIIKLLQMC…CGKKRHLKVM (66 aa).

It belongs to the class-I aminoacyl-tRNA synthetase family. TyrS type 1 subfamily. In terms of assembly, homodimer.

It localises to the cytoplasm. The catalysed reaction is tRNA(Tyr) + L-tyrosine + ATP = L-tyrosyl-tRNA(Tyr) + AMP + diphosphate + H(+). Catalyzes the attachment of tyrosine to tRNA(Tyr) in a two-step reaction: tyrosine is first activated by ATP to form Tyr-AMP and then transferred to the acceptor end of tRNA(Tyr). The sequence is that of Tyrosine--tRNA ligase from Ehrlichia chaffeensis (strain ATCC CRL-10679 / Arkansas).